A 127-amino-acid polypeptide reads, in one-letter code: UPF0102 protein Paes_0016 (127 aa).

This sequence belongs to the UPF0102 family.

The protein is UPF0102 protein Paes_0016 of Prosthecochloris aestuarii (strain DSM 271 / SK 413).